Reading from the N-terminus, the 262-residue chain is Acyl-coenzyme A diphosphatase FITM2 (262 aa).

Residues 1 to 23 (MEHLERCAWFLRGTLVRATVRRH) are Cytoplasmic-facing. The chain crosses the membrane as a helical span at residues 24 to 44 (LPWALVAAMLAGSVVKELSPL). Topologically, residues 45 to 57 (PESYLSNKRNVLN) are lumenal. The helical transmembrane segment at 58–78 (VYFVKLAWAWTVCLLLPFIAL) threads the bilayer. Residues 79-93 (TNYHLTGKTSLVLRR) are Cytoplasmic-facing. Residues 94–114 (LSTLLVGTAIWYICTALFSNI) form a helical membrane-spanning segment. Residues 115 to 145 (EHYTGSCYQSPALEGIRQEHRSKQQCHREGG) are Lumenal-facing. The helical transmembrane segment at 146–166 (FWHGFDISGHSFLLTFCALMI) threads the bilayer. Residue His-155 is part of the active site. Over 167-190 (VEEMAVLHEVKTDRGHHLHAAITT) the chain is Cytoplasmic. A helical membrane pass occupies residues 191-211 (LVVALGFLTFIWVWMFLCTAV). The Lumenal portion of the chain corresponds to 212–218 (YFHDLTQ). His-214 is an active-site residue. Residues 219–239 (KVFGTMFGLLGWYGTYGYWYL) traverse the membrane as a helical segment. Residues 240–262 (KSFSPGLPPQSCSLTLKRDTYKK) lie on the Cytoplasmic side of the membrane.

This sequence belongs to the FIT family. In terms of tissue distribution, widely expressed, with highest levels in white and brown adipose tissues (at protein level). In the heart, mRNA expression levels do not correlate well with protein levels, suggesting post-transcriptional regulation in this organ.

The protein resides in the endoplasmic reticulum membrane. It catalyses the reaction an acyl-CoA + H2O = an acyl-4'-phosphopantetheine + adenosine 3',5'-bisphosphate + 2 H(+). It carries out the reaction (9Z)-octadecenoyl-CoA + H2O = S-(9Z-octadecenoyl)-4'-phosphopantetheine + adenosine 3',5'-bisphosphate + 2 H(+). The catalysed reaction is (5Z,8Z,11Z,14Z)-eicosatetraenoyl-CoA + H2O = S-(5Z,8Z,11Z,14Z-eicosatetraenoyl)-4'-phosphopantetheine + adenosine 3',5'-bisphosphate + 2 H(+). The enzyme catalyses hexadecanoyl-CoA + H2O = S-hexadecanoyl-4'-phosphopantetheine + adenosine 3',5'-bisphosphate + 2 H(+). Functionally, fatty acyl-coenzyme A (CoA) diphosphatase that hydrolyzes fatty acyl-CoA to yield acyl-4'-phosphopantetheine and adenosine 3',5'-bisphosphate. Preferentially hydrolyzes unsaturated long-chain acyl-CoA substrates such as oleoyl-CoA/(9Z)-octadecenoyl-CoA and arachidonoyl-CoA/(5Z,8Z,11Z,14Z)-eicosatetraenoyl-CoA in the endoplasmic reticulum (ER) lumen. This catalytic activity is required for maintaining ER structure and for lipid droplets (LDs) biogenesis, which are lipid storage organelles involved in maintaining lipid and energy homeostasis. Directly binds to diacylglycerol (DAGs) and triacylglycerol, which is also important for LD biogenesis. May support directional budding of nacent LDs from the ER into the cytosol by reducing DAG levels at sites of LD formation. Plays a role in the regulation of cell morphology and cytoskeletal organization. The chain is Acyl-coenzyme A diphosphatase FITM2 from Mus musculus (Mouse).